The chain runs to 195 residues: dTTP/UTP pyrophosphatase (195 aa).

Residue Asp73 is the Proton acceptor of the active site.

The protein belongs to the Maf family. YhdE subfamily. Requires a divalent metal cation as cofactor.

Its subcellular location is the cytoplasm. The catalysed reaction is dTTP + H2O = dTMP + diphosphate + H(+). The enzyme catalyses UTP + H2O = UMP + diphosphate + H(+). Nucleoside triphosphate pyrophosphatase that hydrolyzes dTTP and UTP. May have a dual role in cell division arrest and in preventing the incorporation of modified nucleotides into cellular nucleic acids. The protein is dTTP/UTP pyrophosphatase of Exiguobacterium sibiricum (strain DSM 17290 / CCUG 55495 / CIP 109462 / JCM 13490 / 255-15).